The following is a 448-amino-acid chain: Chaperone SurA (448 aa).

An N-terminal signal peptide occupies residues 1-27; that stretch reads MKKTLRFAAVASGLVASLITVAPSASA. PpiC domains are found at residues 185-288 and 301-399; these read QQDL…RLVE and IVQT…QVLG.

The protein resides in the periplasm. It catalyses the reaction [protein]-peptidylproline (omega=180) = [protein]-peptidylproline (omega=0). Functionally, chaperone involved in the correct folding and assembly of outer membrane proteins. Recognizes specific patterns of aromatic residues and the orientation of their side chains, which are found more frequently in integral outer membrane proteins. May act in both early periplasmic and late outer membrane-associated steps of protein maturation. The sequence is that of Chaperone SurA from Burkholderia mallei (strain ATCC 23344).